The sequence spans 138 residues: NADH dehydrogenase [ubiquinone] 1 alpha subcomplex subunit N7BM (138 aa).

This sequence belongs to the complex I NDUFA12 subunit family. As to quaternary structure, complex I is composed of 42 different subunits.

The protein resides in the mitochondrion inner membrane. In terms of biological role, accessory subunit of the mitochondrial membrane respiratory chain NADH dehydrogenase (Complex I), that is believed not to be involved in catalysis. Complex I functions in the transfer of electrons from NADH to the respiratory chain. The immediate electron acceptor for the enzyme is believed to be ubiquinone. This chain is NADH dehydrogenase [ubiquinone] 1 alpha subcomplex subunit N7BM, found in Yarrowia lipolytica (strain CLIB 122 / E 150) (Yeast).